Consider the following 121-residue polypeptide: Large ribosomal subunit protein bL12 (121 aa).

It belongs to the bacterial ribosomal protein bL12 family. In terms of assembly, homodimer. Part of the ribosomal stalk of the 50S ribosomal subunit. Forms a multimeric L10(L12)X complex, where L10 forms an elongated spine to which 2 to 4 L12 dimers bind in a sequential fashion. Binds GTP-bound translation factors.

In terms of biological role, forms part of the ribosomal stalk which helps the ribosome interact with GTP-bound translation factors. Is thus essential for accurate translation. In Proteus mirabilis (strain HI4320), this protein is Large ribosomal subunit protein bL12.